Reading from the N-terminus, the 653-residue chain is Dystrotelin (653 aa).

The segment at 223-279 (THPVRCSVCRTFPIIGLRYHCLKCLDFDICELCFLSGLHKNSHEKSHTVMEECVQMS) adopts a ZZ-type zinc-finger fold. Residues Cys228, Cys231, Cys243, Cys246, Cys252, Cys255, His265, and His269 each coordinate Zn(2+). Positions 384-411 (RDSLNTLLRERRLLRKQLHRYKQKLQGT) form a coiled coil.

In terms of tissue distribution, strongly expressed in the nervous and muscular tissues.

The protein resides in the cell membrane. In Mus musculus (Mouse), this protein is Dystrotelin (Dytn).